The sequence spans 582 residues: Formate--tetrahydrofolate ligase (582 aa).

ATP is bound at residue 65–72 (TPLGEGKT).

This sequence belongs to the formate--tetrahydrofolate ligase family.

It catalyses the reaction (6S)-5,6,7,8-tetrahydrofolate + formate + ATP = (6R)-10-formyltetrahydrofolate + ADP + phosphate. It functions in the pathway one-carbon metabolism; tetrahydrofolate interconversion. The protein is Formate--tetrahydrofolate ligase of Vibrio parahaemolyticus serotype O3:K6 (strain RIMD 2210633).